Consider the following 100-residue polypeptide: Small ribosomal subunit protein uS14c (100 aa).

It belongs to the universal ribosomal protein uS14 family. In terms of assembly, part of the 30S ribosomal subunit.

It localises to the plastid. It is found in the chloroplast. In terms of biological role, binds 16S rRNA, required for the assembly of 30S particles. This is Small ribosomal subunit protein uS14c from Tetradesmus obliquus (Green alga).